Consider the following 94-residue polypeptide: ESAT-6-like protein EsxL (94 aa).

This sequence belongs to the WXG100 family. ESAT-6 subfamily. Strongly interacts with EsxK to form a heterodimeric complex under reducing conditions. The complex is regulated by the redox state of EsxL.

The protein localises to the secreted. In terms of biological role, induces apoptosis of host cells. Is immunogenic with highly specific seroreactivity towards TB patients' serum. This Mycobacterium tuberculosis (strain ATCC 25618 / H37Rv) protein is ESAT-6-like protein EsxL.